A 302-amino-acid chain; its full sequence is Sulfate adenylyltransferase subunit 2 (302 aa).

This sequence belongs to the PAPS reductase family. CysD subfamily. In terms of assembly, heterodimer composed of CysD, the smaller subunit, and CysN.

The catalysed reaction is sulfate + ATP + H(+) = adenosine 5'-phosphosulfate + diphosphate. It participates in sulfur metabolism; hydrogen sulfide biosynthesis; sulfite from sulfate: step 1/3. Functionally, with CysN forms the ATP sulfurylase (ATPS) that catalyzes the adenylation of sulfate producing adenosine 5'-phosphosulfate (APS) and diphosphate, the first enzymatic step in sulfur assimilation pathway. APS synthesis involves the formation of a high-energy phosphoric-sulfuric acid anhydride bond driven by GTP hydrolysis by CysN coupled to ATP hydrolysis by CysD. In Escherichia coli O9:H4 (strain HS), this protein is Sulfate adenylyltransferase subunit 2.